The following is a 158-amino-acid chain: Snaclec mucrocetin subunit alpha (158 aa).

An N-terminal signal peptide occupies residues 1-23 (MGRFIFVSFGLLVVFLSLSGTGA). Cystine bridges form between Cys27-Cys38, Cys55-Cys152, and Cys127-Cys144. Residues 34–153 (YDRYCYQAFS…CGRENPFVCK (120 aa)) form the C-type lectin domain.

It belongs to the snaclec family. In terms of assembly, tetramer of heterodimers of alpha and beta subunits (alphabeta)(4); disulfide-linked. In terms of tissue distribution, expressed by the venom gland.

The protein localises to the secreted. Platelet-agglutinating factor that acts in a vWF-independent manner. Binds specifically to platelet GPIbalpha (GP1BA) to a distinct binding site from that of flavocetin-A. The sequence is that of Snaclec mucrocetin subunit alpha from Protobothrops mucrosquamatus (Taiwan habu).